The following is a 226-amino-acid chain: Urease accessory protein UreG (226 aa).

Positions 1–26 (MPPHFLDGQPHGHTDRPRRVRQPGEP) are disordered. A GTP-binding site is contributed by 33 to 40 (GPVGSGKT).

This sequence belongs to the SIMIBI class G3E GTPase family. UreG subfamily. As to quaternary structure, homodimer. UreD, UreF and UreG form a complex that acts as a GTP-hydrolysis-dependent molecular chaperone, activating the urease apoprotein by helping to assemble the nickel containing metallocenter of UreC. The UreE protein probably delivers the nickel.

It localises to the cytoplasm. Functionally, facilitates the functional incorporation of the urease nickel metallocenter. This process requires GTP hydrolysis, probably effectuated by UreG. The sequence is that of Urease accessory protein UreG from Mycolicibacterium vanbaalenii (strain DSM 7251 / JCM 13017 / BCRC 16820 / KCTC 9966 / NRRL B-24157 / PYR-1) (Mycobacterium vanbaalenii).